A 214-amino-acid chain; its full sequence is Small ribosomal subunit protein uS3c (214 aa).

The KH type-2 domain maps to 39–111 (IRTYLNKLAK…QITINVVEVE (73 aa)).

It belongs to the universal ribosomal protein uS3 family. In terms of assembly, part of the 30S ribosomal subunit.

Its subcellular location is the plastid. It localises to the chloroplast. This is Small ribosomal subunit protein uS3c (rps3) from Thalassiosira pseudonana (Marine diatom).